Here is a 429-residue protein sequence, read N- to C-terminus: 3-phosphoshikimate 1-carboxyvinyltransferase (429 aa).

3-phosphoshikimate-binding residues include Lys-22, Ser-23, and Arg-27. Lys-22 is a phosphoenolpyruvate binding site. Phosphoenolpyruvate is bound by residues Gly-94 and Arg-122. Residues Ser-167, Gln-169, Asp-315, and Lys-342 each coordinate 3-phosphoshikimate. Gln-169 is a binding site for phosphoenolpyruvate. Asp-315 (proton acceptor) is an active-site residue. Phosphoenolpyruvate contacts are provided by Arg-346 and Arg-388.

This sequence belongs to the EPSP synthase family. In terms of assembly, monomer.

It is found in the cytoplasm. It carries out the reaction 3-phosphoshikimate + phosphoenolpyruvate = 5-O-(1-carboxyvinyl)-3-phosphoshikimate + phosphate. Its pathway is metabolic intermediate biosynthesis; chorismate biosynthesis; chorismate from D-erythrose 4-phosphate and phosphoenolpyruvate: step 6/7. Catalyzes the transfer of the enolpyruvyl moiety of phosphoenolpyruvate (PEP) to the 5-hydroxyl of shikimate-3-phosphate (S3P) to produce enolpyruvyl shikimate-3-phosphate and inorganic phosphate. The sequence is that of 3-phosphoshikimate 1-carboxyvinyltransferase from Geobacter metallireducens (strain ATCC 53774 / DSM 7210 / GS-15).